The chain runs to 729 residues: MSKRRIEVGETYGSKAKKDPEASSSSAAAAAGTVAQILGGFVPNKQPPTMNPLTNTPYSQRYQNLYKKRIALPVFEYQADFMRLLSLHQCIVLVGETGSGKTTQIPQWCVDFAVSKGRKGVSCTQPRRVAAMSVAQRVSEEMDVKLGEEVGYSIRFEDCSTAKTLLKYMTDGMLLREAMSDPMLDQYQVILLDEAHERTLATDILMGVLKEVIRQRSDLKLVVMSATLDAGKFQQYFDNAPLMKVPGRTHPVEIFYTPEPERDYLEAAIRTVIQIHMCEEIEGDILMFLTGQEEIEEACKRIKREIDNLGSEIGELKCIPLYSTLPPNLQQRIFEPAPPPNANGAIGRKVVVSTNIAETSLTIDGVVFVIDPGFAKQKVYNPRIRVESLLVSPISKASAQQRSGRAGRTRPGKCFRLYTEKAFKNEMQDNTYPEILRSNLGTVVLQLKKLGIDDLVHFDFMDPPAPETLMRALELLNYLAALDDDGNLTDLGAVMSEFPLDPQLAKMLIASCQHNCSNEILSITAMLSVPQCFVRPNEAKKAADEAKMRFAHIDGDHLTLLNVYHAFKQSSEDPNWCYENFINFRSLKSADNVRQQLARIMDRFNLRRTSTEFTSKDYYVNIRKALVQGFFMQVAHLERTGYYLTIKDNQNVQLHPSTCLDHKPDWVIYNEFVLTTKNYIRTVTDVKPEWLCCLAPQYYDLNNFPQCEAKRQLELLQQRLETKQYQKGF.

The segment at 1–25 (MSKRRIEVGETYGSKAKKDPEASSS) is disordered. The region spanning 82 to 246 (MRLLSLHQCI…FDNAPLMKVP (165 aa)) is the Helicase ATP-binding domain. An ATP-binding site is contributed by 95 to 102 (GETGSGKT). The short motif at 193 to 196 (DEAH) is the DEAH box element. Positions 271–451 (TVIQIHMCEE…TVVLQLKKLG (181 aa)) constitute a Helicase C-terminal domain.

It belongs to the DEAD box helicase family. DEAH subfamily. DDX15/PRP43 sub-subfamily.

The enzyme catalyses ATP + H2O = ADP + phosphate + H(+). Its function is as follows. RNA helicase involved in mRNA processing and antiviral innate immunity. Acts as an activator of the p38 MAPK cascade. The sequence is that of ATP-dependent RNA helicase DHX15 homolog from Drosophila melanogaster (Fruit fly).